Consider the following 1401-residue polypeptide: DNA-directed RNA polymerase subunit beta' (1401 aa).

4 residues coordinate Zn(2+): cysteine 71, cysteine 73, cysteine 86, and cysteine 89. Mg(2+) contacts are provided by aspartate 462, aspartate 464, and aspartate 466. 4 residues coordinate Zn(2+): cysteine 810, cysteine 884, cysteine 891, and cysteine 894. A disordered region spans residues 1378–1401; the sequence is EKQATIVPSAPEPEPLALPTPEQS.

It belongs to the RNA polymerase beta' chain family. As to quaternary structure, the RNAP catalytic core consists of 2 alpha, 1 beta, 1 beta' and 1 omega subunit. When a sigma factor is associated with the core the holoenzyme is formed, which can initiate transcription. Requires Mg(2+) as cofactor. Zn(2+) serves as cofactor.

It catalyses the reaction RNA(n) + a ribonucleoside 5'-triphosphate = RNA(n+1) + diphosphate. Its function is as follows. DNA-dependent RNA polymerase catalyzes the transcription of DNA into RNA using the four ribonucleoside triphosphates as substrates. The protein is DNA-directed RNA polymerase subunit beta' of Rhodopseudomonas palustris (strain BisB18).